Here is a 140-residue protein sequence, read N- to C-terminus: Fluoride-specific ion channel FluC 1 (140 aa).

Transmembrane regions (helical) follow at residues 3-23 (TGAT…GAAA), 38-58 (APLW…GLVL), 80-100 (ILYP…STVM), and 113-133 (IAGV…ALWC). Residues Gly91 and Thr94 each coordinate Na(+).

It belongs to the fluoride channel Fluc/FEX (TC 1.A.43) family.

The protein localises to the cell membrane. The enzyme catalyses fluoride(in) = fluoride(out). Na(+) is not transported, but it plays an essential structural role and its presence is essential for fluoride channel function. Functionally, fluoride-specific ion channel. Important for reducing fluoride concentration in the cell, thus reducing its toxicity. This is Fluoride-specific ion channel FluC 1 from Corynebacterium jeikeium (strain K411).